Here is a 232-residue protein sequence, read N- to C-terminus: Ribonuclease 3 (232 aa).

Residues 6–135 (QDYLAKTYGI…FIGALYLDQG (130 aa)) form the RNase III domain. Glu48 provides a ligand contact to Mg(2+). Asp52 is a catalytic residue. Asp121 and Glu124 together coordinate Mg(2+). The active site involves Glu124. The 70-residue stretch at 161–230 (DAKTSLQEFL…AKHALEKLRM (70 aa)) folds into the DRBM domain.

The protein belongs to the ribonuclease III family. In terms of assembly, homodimer. Mg(2+) is required as a cofactor.

It localises to the cytoplasm. The catalysed reaction is Endonucleolytic cleavage to 5'-phosphomonoester.. Functionally, digests double-stranded RNA. Involved in the processing of primary rRNA transcript to yield the immediate precursors to the large and small rRNAs (23S and 16S). Processes some mRNAs, and tRNAs when they are encoded in the rRNA operon. Processes pre-crRNA and tracrRNA of type II CRISPR loci if present in the organism. This Limosilactobacillus fermentum (strain NBRC 3956 / LMG 18251) (Lactobacillus fermentum) protein is Ribonuclease 3.